Here is an 806-residue protein sequence, read N- to C-terminus: Phenylalanine--tRNA ligase beta subunit (806 aa).

The 116-residue stretch at 40 to 155 (NKGVKGVVVG…SDAEVGADAL (116 aa)) folds into the tRNA-binding domain. One can recognise a B5 domain in the interval 409–484 (VQERTVSVTA…RLYGYDHIPV (76 aa)). Mg(2+) contacts are provided by Asp-462, Asp-468, Glu-471, and Glu-472. The FDX-ACB domain occupies 712 to 805 (PRFPSMTRDM…VEEKFGAELR (94 aa)).

Belongs to the phenylalanyl-tRNA synthetase beta subunit family. Type 1 subfamily. In terms of assembly, tetramer of two alpha and two beta subunits. Requires Mg(2+) as cofactor.

Its subcellular location is the cytoplasm. It carries out the reaction tRNA(Phe) + L-phenylalanine + ATP = L-phenylalanyl-tRNA(Phe) + AMP + diphosphate + H(+). The chain is Phenylalanine--tRNA ligase beta subunit from Bacillus cereus (strain ZK / E33L).